We begin with the raw amino-acid sequence, 172 residues long: Putative phosphoesterase BCAH820_1309 (172 aa).

Catalysis depends on His34, which acts as the Proton donor. Short sequence motifs (HXTX) lie at residues 34–37 and 115–118; these read HITL and HLTI. Catalysis depends on His115, which acts as the Proton acceptor.

This sequence belongs to the 2H phosphoesterase superfamily. YjcG family.

The polypeptide is Putative phosphoesterase BCAH820_1309 (Bacillus cereus (strain AH820)).